The chain runs to 339 residues: Ornithine utilization regulator (339 aa).

An HTH araC/xylS-type domain is found at 241–338; the sequence is TRVRRLLLAR…GKLPSDYREA (98 aa). 2 consecutive DNA-binding regions (H-T-H motif) follow at residues 258–279 and 305–328; these read EQAARELHTSGRSLRRHLSSLG and LYEIALLLGFNDSSNFRRAFRKWT.

In terms of biological role, probably activates the ArgJ gene that encodes ornithine acetyltransferase. Binds to its own promoter-operator region. Probably binds ornithine. The sequence is that of Ornithine utilization regulator (oruR) from Pseudomonas aeruginosa (strain ATCC 15692 / DSM 22644 / CIP 104116 / JCM 14847 / LMG 12228 / 1C / PRS 101 / PAO1).